We begin with the raw amino-acid sequence, 227 residues long: Phosphatidylserine decarboxylase proenzyme (227 aa).

Residue serine 184 is the Schiff-base intermediate with substrate; via pyruvic acid of the active site. A Pyruvic acid (Ser); by autocatalysis modification is found at serine 184.

The protein belongs to the phosphatidylserine decarboxylase family. PSD-A subfamily. In terms of assembly, heterodimer of a large membrane-associated beta subunit and a small pyruvoyl-containing alpha subunit. Requires pyruvate as cofactor. Post-translationally, is synthesized initially as an inactive proenzyme. Formation of the active enzyme involves a self-maturation process in which the active site pyruvoyl group is generated from an internal serine residue via an autocatalytic post-translational modification. Two non-identical subunits are generated from the proenzyme in this reaction, and the pyruvate is formed at the N-terminus of the alpha chain, which is derived from the carboxyl end of the proenzyme. The post-translation cleavage follows an unusual pathway, termed non-hydrolytic serinolysis, in which the side chain hydroxyl group of the serine supplies its oxygen atom to form the C-terminus of the beta chain, while the remainder of the serine residue undergoes an oxidative deamination to produce ammonia and the pyruvoyl prosthetic group on the alpha chain.

It is found in the cell membrane. The catalysed reaction is a 1,2-diacyl-sn-glycero-3-phospho-L-serine + H(+) = a 1,2-diacyl-sn-glycero-3-phosphoethanolamine + CO2. Its pathway is phospholipid metabolism; phosphatidylethanolamine biosynthesis; phosphatidylethanolamine from CDP-diacylglycerol: step 2/2. Functionally, catalyzes the formation of phosphatidylethanolamine (PtdEtn) from phosphatidylserine (PtdSer). The protein is Phosphatidylserine decarboxylase proenzyme of Ehrlichia ruminantium (strain Gardel).